Reading from the N-terminus, the 354-residue chain is Guanine nucleotide-binding protein G(i) subunit alpha-1 (354 aa).

Gly-2 is lipidated: N-myristoyl glycine. Residue Cys-3 is the site of S-palmitoyl cysteine attachment. Positions Arg-32–Phe-354 constitute a G-alpha domain. Positions Lys-35–Thr-48 are G1 motif. Residues Glu-43 to Thr-48, Asp-150 to Ser-151, and Leu-175 to Arg-178 contribute to the GTP site. Position 47 (Ser-47) interacts with Mg(2+). Positions Asp-173 to Thr-181 are G2 motif. Thr-181 lines the Mg(2+) pocket. The interval Phe-196–Arg-205 is G3 motif. Residues Asp-200 to Gln-204, Asn-269 to Asp-272, and Ala-326 each bind GTP. The tract at residues Ile-265–Asp-272 is G4 motif. The G5 motif stretch occupies residues Thr-324 to Thr-329.

Belongs to the G-alpha family. G(i/o/t/z) subfamily. As to quaternary structure, heterotrimeric G proteins are composed of 3 units; alpha, beta and gamma. The alpha chain contains the guanine nucleotide binding site. Part of a spindle orientation complex. Identified in complex with the beta subunit GNB1 and the gamma subunit GNG1. Identified in complex with the beta subunit GNB1 and the gamma subunit GNG2. GTP binding causes dissociation of the heterotrimer, liberating the individual subunits so that they can interact with downstream effector proteins. Myristoylation at Gly-2 is required for membrane anchoring before palmitoylation. Post-translationally, palmitoylation at Cys-3 varies with membrane lipid composition.

The protein resides in the nucleus. It localises to the cytoplasm. Its subcellular location is the cell membrane. The protein localises to the cytoskeleton. It is found in the microtubule organizing center. The protein resides in the centrosome. It localises to the cell cortex. Its subcellular location is the membrane. It carries out the reaction GTP + H2O = GDP + phosphate + H(+). In terms of biological role, guanine nucleotide-binding proteins (G proteins) function as transducers downstream of G protein-coupled receptors (GPCRs) in numerous signaling cascades. The alpha chain contains the guanine nucleotide binding site and alternates between an active, GTP-bound state and an inactive, GDP-bound state. Signaling by an activated GPCR promotes GDP release and GTP binding. The alpha subunit has a low GTPase activity that converts bound GTP to GDP, thereby terminating the signal. Both GDP release and GTP hydrolysis are modulated by numerous regulatory proteins. Signaling is mediated via effector proteins, such as adenylate cyclase. Inhibits adenylate cyclase activity, leading to decreased intracellular cAMP levels. Required for cortical dynein-dynactin complex recruitment during metaphase. The protein is Guanine nucleotide-binding protein G(i) subunit alpha-1 (gnai1) of Oryzias latipes (Japanese rice fish).